A 367-amino-acid chain; its full sequence is Phospho-N-acetylmuramoyl-pentapeptide-transferase (367 aa).

10 helical membrane passes run 27–47 (VLAAMTALLLSLAAGPAVIRW), 73–93 (TMGGVLILIAIGITTLLWGDL), 97–117 (YVWTVLVVTLGYGIVGWYDDW), 132–152 (WKFFWQSVLGIGAALFIAFSA), 167–187 (TMAYPLGVIGFITLTYFVIVG), 200–220 (GLAIMPTVMIAAAFALIAYVT), 237–257 (AGELCIFLGAIAGAGLGFLWF), 264–284 (VFMGDVGALALGAALGTVAVI), 289–309 (IVLLIMGGVFVIETLSVMLQV), and 344–364 (QVVVRFWIITIMLVLIGLSTL).

Belongs to the glycosyltransferase 4 family. MraY subfamily. Mg(2+) serves as cofactor.

It localises to the cell inner membrane. The enzyme catalyses UDP-N-acetyl-alpha-D-muramoyl-L-alanyl-gamma-D-glutamyl-meso-2,6-diaminopimeloyl-D-alanyl-D-alanine + di-trans,octa-cis-undecaprenyl phosphate = di-trans,octa-cis-undecaprenyl diphospho-N-acetyl-alpha-D-muramoyl-L-alanyl-D-glutamyl-meso-2,6-diaminopimeloyl-D-alanyl-D-alanine + UMP. It functions in the pathway cell wall biogenesis; peptidoglycan biosynthesis. Its function is as follows. Catalyzes the initial step of the lipid cycle reactions in the biosynthesis of the cell wall peptidoglycan: transfers peptidoglycan precursor phospho-MurNAc-pentapeptide from UDP-MurNAc-pentapeptide onto the lipid carrier undecaprenyl phosphate, yielding undecaprenyl-pyrophosphoryl-MurNAc-pentapeptide, known as lipid I. This is Phospho-N-acetylmuramoyl-pentapeptide-transferase from Dechloromonas aromatica (strain RCB).